A 255-amino-acid polypeptide reads, in one-letter code: tRNA (guanine-N(1)-)-methyltransferase (255 aa).

Residues G113 and 133-138 (IGDYVL) contribute to the S-adenosyl-L-methionine site.

This sequence belongs to the RNA methyltransferase TrmD family. In terms of assembly, homodimer.

Its subcellular location is the cytoplasm. The enzyme catalyses guanosine(37) in tRNA + S-adenosyl-L-methionine = N(1)-methylguanosine(37) in tRNA + S-adenosyl-L-homocysteine + H(+). Specifically methylates guanosine-37 in various tRNAs. This chain is tRNA (guanine-N(1)-)-methyltransferase, found in Salmonella choleraesuis (strain SC-B67).